Consider the following 147-residue polypeptide: Ribonuclease H (147 aa).

One can recognise an RNase H type-1 domain in the interval 1-142 (MAGKVVMYTD…ADELANRGVR (142 aa)). Mg(2+) is bound by residues Asp10, Glu48, Asp70, and Asp134.

This sequence belongs to the RNase H family. As to quaternary structure, monomer. The cofactor is Mg(2+).

It is found in the cytoplasm. The catalysed reaction is Endonucleolytic cleavage to 5'-phosphomonoester.. In terms of biological role, endonuclease that specifically degrades the RNA of RNA-DNA hybrids. This chain is Ribonuclease H, found in Marinobacter nauticus (strain ATCC 700491 / DSM 11845 / VT8) (Marinobacter aquaeolei).